The primary structure comprises 691 residues: Glycine--tRNA ligase beta subunit (691 aa).

It belongs to the class-II aminoacyl-tRNA synthetase family. Tetramer of two alpha and two beta subunits.

It is found in the cytoplasm. The enzyme catalyses tRNA(Gly) + glycine + ATP = glycyl-tRNA(Gly) + AMP + diphosphate. This chain is Glycine--tRNA ligase beta subunit, found in Buchnera aphidicola subsp. Schizaphis graminum (strain Sg).